The primary structure comprises 409 residues: Nucleoprotein (409 aa).

4 disordered regions span residues 1–32 (MASG…SSGN), 44–63 (LNSP…ENLK), 120–145 (GADT…LRFS), and 164–193 (RSGR…SGAE). The span at 15-31 (PVIKLGGPKPPKVGSSG) shows a compositional bias: low complexity. The RNA-binding stretch occupies residues 29–160 (SSGNASWFQA…GNFRWDFIPI (132 aa)). Residues 31–156 (GNASWFQALK…GGPDGNFRWD (126 aa)) enclose the CoV N NTD domain. Residues 164-179 (RSGRSTAASSAASSRA) are compositionally biased toward low complexity. The segment covering 180–192 (PSRDGSRGRRSGA) has biased composition (basic and acidic residues). Position 190 is a phosphoserine; by host (Ser-190). One can recognise a CoV N CTD domain in the interval 215–331 (TKAKADEMAH…QCVDGVGTRP (117 aa)). The dimerization stretch occupies residues 226–333 (RYCKRTIPPG…VDGVGTRPKD (108 aa)). Cys-320 and Cys-323 are oxidised to a cystine. The tract at residues 326-409 (GVGTRPKDDE…GDSALGENEL (84 aa)) is disordered. Positions 341-355 (RPNSRPATRTSSPAP) are enriched in polar residues. Basic residues predominate over residues 358–367 (QRQKKEKKSK). Positions 368–384 (KQDDEVDKALTSDEERN) are enriched in basic and acidic residues. Thr-378 is modified (phosphothreonine; by host). Residue Ser-379 is modified to Phosphoserine; by host.

The protein belongs to the gammacoronavirus nucleocapsid protein family. In terms of assembly, homooligomer. Both monomeric and oligomeric forms interact with RNA. Interacts with protein M. Interacts with NSP3; this interaction serves to tether the genome to the newly translated replicase-transcriptase complex at a very early stage of infection. Post-translationally, ADP-ribosylated. The ADP-ribosylation is retained in the virion during infection. In terms of processing, phosphorylated on serine and threonine residues.

Its subcellular location is the virion. The protein resides in the host endoplasmic reticulum-Golgi intermediate compartment. It is found in the host Golgi apparatus. Packages the positive strand viral genome RNA into a helical ribonucleocapsid (RNP) and plays a fundamental role during virion assembly through its interactions with the viral genome and membrane protein M. Plays an important role in enhancing the efficiency of subgenomic viral RNA transcription as well as viral replication. This Avian infectious bronchitis virus (strain H120) (IBV) protein is Nucleoprotein.